A 737-amino-acid chain; its full sequence is Ribosome-releasing factor 2, mitochondrial (737 aa).

A mitochondrion-targeting transit peptide spans 1 to 29 (MLKYALHSGGMPRNRLLRQLSAHIFRRSY). In terms of domain architecture, tr-type G spans 31–310 (SNIRNIGILA…AVNTYLPAPE (280 aa)). Residues 40 to 47 (AHIDAGKT), 104 to 108 (DTPGH), and 158 to 161 (NKMD) contribute to the GTP site.

It belongs to the TRAFAC class translation factor GTPase superfamily. Classic translation factor GTPase family. EF-G/EF-2 subfamily.

Its subcellular location is the mitochondrion. In terms of biological role, mitochondrial GTPase that mediates the disassembly of ribosomes from messenger RNA at the termination of mitochondrial protein biosynthesis. Not involved in the GTP-dependent ribosomal translocation step during translation elongation. This Drosophila pseudoobscura pseudoobscura (Fruit fly) protein is Ribosome-releasing factor 2, mitochondrial.